Here is a 242-residue protein sequence, read N- to C-terminus: Intraflagellar transport-associated protein (242 aa).

Ser-57 bears the Phosphoserine mark.

As to quaternary structure, interacts with IFT122; the interaction associates IFTAP with IFT-A complex.

Seems to play a role in ciliary BBSome localization, maybe through interaction with IFT-A complex. The polypeptide is Intraflagellar transport-associated protein (IFTAP) (Bos taurus (Bovine)).